The chain runs to 245 residues: Ribosome maturation factor RimP (245 aa).

The protein belongs to the RimP family.

It is found in the cytoplasm. Required for maturation of 30S ribosomal subunits. In Verminephrobacter eiseniae (strain EF01-2), this protein is Ribosome maturation factor RimP.